A 204-amino-acid polypeptide reads, in one-letter code: 3-isopropylmalate dehydratase small subunit (204 aa).

The protein belongs to the LeuD family. LeuD type 1 subfamily. In terms of assembly, heterodimer of LeuC and LeuD.

The enzyme catalyses (2R,3S)-3-isopropylmalate = (2S)-2-isopropylmalate. It participates in amino-acid biosynthesis; L-leucine biosynthesis; L-leucine from 3-methyl-2-oxobutanoate: step 2/4. In terms of biological role, catalyzes the isomerization between 2-isopropylmalate and 3-isopropylmalate, via the formation of 2-isopropylmaleate. The protein is 3-isopropylmalate dehydratase small subunit of Roseiflexus sp. (strain RS-1).